A 274-amino-acid polypeptide reads, in one-letter code: Glutamate--cysteine ligase regulatory subunit (274 aa).

Position 59 is a phosphoserine (S59). At K263 the chain carries N6-acetyllysine.

This sequence belongs to the aldo/keto reductase family. Glutamate--cysteine ligase light chain subfamily. Heterodimer of a catalytic heavy chain and a regulatory light chain.

Its pathway is sulfur metabolism; glutathione biosynthesis; glutathione from L-cysteine and L-glutamate: step 1/2. In Bos taurus (Bovine), this protein is Glutamate--cysteine ligase regulatory subunit (GCLM).